The chain runs to 246 residues: Alpha-amylase inhibitor 1 (246 aa).

The first 23 residues, 1–23 (MIMASSKLLSLALFLALLSHANS), serve as a signal peptide directing secretion. 3 N-linked (GlcNAc...) asparagine glycosylation sites follow: asparagine 35, asparagine 88, and asparagine 163. The propeptide occupies 240–246 (IVLNKIL).

The protein belongs to the leguminous lectin family. Heterodimer of chain 1 and chain 2. Proteolytic processing yields active form.

Lectin and alpha-amylase inhibitor. Acts as a defensive protein against insects. The protein is Alpha-amylase inhibitor 1 (LLP) of Phaseolus vulgaris (Kidney bean).